Reading from the N-terminus, the 2477-residue chain is Spectrin alpha chain, non-erythrocytic 1 (2477 aa).

The segment at 1 to 14 (MDPSGVKVLETAED) is N-terminal domain. Spectrin repeat units lie at residues 45–146 (RFQF…VKLL), 150–251 (KLVQ…QGKL), 256–358 (EVQR…ARLN), 361–465 (YRLQ…QYEQ), 468–570 (DLQL…AQLA), 574–676 (HLQQ…KLRE), 679–781 (QQQQ…QKLA), 785–888 (RLQQ…DLED), 891–969 (QAQQ…ETGK), and 1096–1162 (LFRE…SEGL). The SH3 domain maps to 967 to 1026 (TGKELVLALYDYQEKSPREVTMKKGDILTLLNSTNKDWWKVEVNDRQGFVPAAYVKKLDP). Tyr-1176 is subject to Phosphotyrosine. 10 Spectrin repeats span residues 1234-1336 (EVQR…EKLG), 1339-1442 (HDLQ…MMLD), 1446-1549 (ELQL…KLGE), 1552-1661 (TLQQ…KLKE), 1664-1767 (KQQN…KLNE), 1769-1873 (HRLH…RLEE), 1876-1979 (EYQQ…KLDE), 1983-2086 (FLQF…KLLE), 2097-2199 (LFLT…LELQ), and 2211-2315 (LRQE…NLEQ). Residues 2257–2477 (HQEIRAMRSQ…IEFTRSLFVN (221 aa)) are C-terminal domain. 3 consecutive EF-hand domains span residues 2328 to 2363 (EALK…LGYD), 2371 to 2406 (EPDP…RETE), and 2409 to 2444 (KSSE…EQAD). Ca(2+) contacts are provided by Asp-2341, Asp-2343, Ser-2345, Arg-2347, Glu-2352, Asp-2384, Asn-2386, Asp-2388, His-2390, and Glu-2395.

This sequence belongs to the spectrin family. As to quaternary structure, like erythrocyte spectrin, the spectrin-like proteins are capable of forming dimers which can further associate to tetramers. Interacts with ACP1. Post-translationally, phosphorylation of Tyr-1176 decreases sensitivity to cleavage by calpain in vitro.

Its subcellular location is the cytoplasm. The protein resides in the cytoskeleton. It localises to the cell cortex. Morphologically, spectrin-like proteins appear to be related to spectrin, showing a flexible rod-like structure. They can bind actin but seem to differ in their calmodulin-binding activity. In nonerythroid tissues, spectrins, in association with some other proteins, may play an important role in membrane organization. This Gallus gallus (Chicken) protein is Spectrin alpha chain, non-erythrocytic 1 (SPTAN1).